A 339-amino-acid polypeptide reads, in one-letter code: Anthranilate phosphoribosyltransferase (339 aa).

Residues G80, 83 to 84 (GD), 90 to 93 (NVST), 108 to 116 (KHGNRSVTS), and S120 each bind 5-phospho-alpha-D-ribose 1-diphosphate. G80 contacts anthranilate. S92 is a Mg(2+) binding site. N111 provides a ligand contact to anthranilate. R166 is a binding site for anthranilate. D225 and E226 together coordinate Mg(2+).

This sequence belongs to the anthranilate phosphoribosyltransferase family. In terms of assembly, homodimer. Mg(2+) is required as a cofactor.

The catalysed reaction is N-(5-phospho-beta-D-ribosyl)anthranilate + diphosphate = 5-phospho-alpha-D-ribose 1-diphosphate + anthranilate. Its pathway is amino-acid biosynthesis; L-tryptophan biosynthesis; L-tryptophan from chorismate: step 2/5. In terms of biological role, catalyzes the transfer of the phosphoribosyl group of 5-phosphorylribose-1-pyrophosphate (PRPP) to anthranilate to yield N-(5'-phosphoribosyl)-anthranilate (PRA). This chain is Anthranilate phosphoribosyltransferase, found in Ignicoccus hospitalis (strain KIN4/I / DSM 18386 / JCM 14125).